The chain runs to 135 residues: Large ribosomal subunit protein eL32 (135 aa).

It belongs to the eukaryotic ribosomal protein eL32 family.

In Methanococcus vannielii, this protein is Large ribosomal subunit protein eL32 (rpl32e).